The sequence spans 60 residues: Ferredoxin (60 aa).

2 4Fe-4S ferredoxin-type domains span residues 2–30 and 31–60; these read VTIDYDKCKGPECAECVNACPMEVFEIQG and DKVVVAKEDDCTFCMVCVDVCPTDAITVKE. [4Fe-4S] cluster is bound by residues C9, C14, C17, C21, C41, C44, C47, and C51.

[4Fe-4S] cluster serves as cofactor.

Functionally, ferredoxins are iron-sulfur proteins that transfer electrons probably in the CO-dehydrogenase complex. This is Ferredoxin from Methanothermococcus thermolithotrophicus (Methanococcus thermolithotrophicus).